The chain runs to 2510 residues: Highly reducing polyketide synthase g433 (2510 aa).

The segment at methionine 1–histidine 54 is disordered. Positions asparagine 22–serine 45 are enriched in low complexity. In terms of domain architecture, Ketosynthase family 3 (KS3) spans aspartate 58–serine 477. Catalysis depends on for beta-ketoacyl synthase activity residues cysteine 229, histidine 365, and histidine 400. The malonyl-CoA:ACP transacylase (MAT) domain stretch occupies residues phenylalanine 574–aspartate 880. The segment at histidine 942–serine 1070 is N-terminal hotdog fold. The segment at histidine 942 to aspartate 1226 is dehydratase (DH) domain. A PKS/mFAS DH domain is found at histidine 942–glycine 1229. Residue histidine 974 is the Proton acceptor; for dehydratase activity of the active site. The tract at residues proline 1083–glycine 1229 is C-terminal hotdog fold. Aspartate 1144 (proton donor; for dehydratase activity) is an active-site residue. The methyltransferase (CMet) domain stretch occupies residues aspartate 1395 to aspartate 1574. The tract at residues glycine 1787–isoleucine 2097 is enoyl reductase (ER) (ER) domain. Residues serine 2122 to glutamate 2296 form a ketoreductase (KR) domain region. The region spanning serine 2419 to leucine 2496 is the Carrier domain. Position 2456 is an O-(pantetheine 4'-phosphoryl)serine (serine 2456).

Its pathway is mycotoxin biosynthesis. Functionally, highly reducing polyketide synthase; part of the gene cluster that mediates the biosynthesis of 1233A, a natural compound known as an inhibitor of HMG-CoA synthase in the mevalonate pathway and with antibacterial and antifungal activities. The highly reducing polyketide synthase g433 gene is responsible for the 1233A backbone biosynthesis and the cytochrome P450 monooxygenase g430 catalyzes oxidation of the backbone. This chain is Highly reducing polyketide synthase g433, found in Fusarium sp.